The following is a 320-amino-acid chain: Glutaminase (320 aa).

Substrate-binding residues include serine 70, asparagine 121, glutamate 165, asparagine 172, tyrosine 196, tyrosine 248, and valine 266.

The protein belongs to the glutaminase family. In terms of assembly, homotetramer.

The catalysed reaction is L-glutamine + H2O = L-glutamate + NH4(+). The polypeptide is Glutaminase (Mycobacterium marinum (strain ATCC BAA-535 / M)).